The sequence spans 122 residues: Protein NIM1-INTERACTING 2 (122 aa).

Residues 1–22 show a composition bias toward basic and acidic residues; sequence MNNSLKKEERVEEDNGKSDGNR. Positions 1 to 28 are disordered; it reads MNNSLKKEERVEEDNGKSDGNRGKPSTE. Residues 39–45 are involved in NPR1/NIM1 interaction; it reads DEFFKIL. Positions 70-74 match the Nuclear localization signal motif; that stretch reads KKRKR.

Interacts with NPR1 N-terminal region.

The protein resides in the nucleus. This chain is Protein NIM1-INTERACTING 2, found in Arabidopsis thaliana (Mouse-ear cress).